We begin with the raw amino-acid sequence, 148 residues long: Lysozyme-like protein 6 (148 aa).

Residues 1-19 form the signal peptide; sequence MLKALFICVASCLLVVNDG. A C-type lysozyme domain is found at 20-148; it reads NIIHRCSLAK…SYWMTGCHLG (129 aa). 4 cysteine pairs are disulfide-bonded: Cys-25/Cys-145, Cys-49/Cys-133, Cys-83/Cys-98, and Cys-94/Cys-112. Glu-54 is a catalytic residue. N-linked (GlcNAc...) asparagine glycosylation is present at Asn-58. Asp-71 is an active-site residue.

It belongs to the glycosyl hydrolase 22 family. In terms of assembly, monomer. Expressed strongly in testis and epididymis and weakly in seminal vesicle, vas deferens, kidney and spleen. Highly expressed in primary spermatocytes and round spermatids (at protein level).

Its subcellular location is the secreted. It is found in the cell surface. The protein resides in the cell projection. The protein localises to the cilium. It localises to the flagellum. It carries out the reaction Hydrolysis of (1-&gt;4)-beta-linkages between N-acetylmuramic acid and N-acetyl-D-glucosamine residues in a peptidoglycan and between N-acetyl-D-glucosamine residues in chitodextrins.. Functionally, may be involved sperm-egg plasma membrane adhesion and fusion during fertilization. Exhibits bacteriolytic activity in vitro against Micrococcus luteus and Staphylococcus aureus. Shows weak bacteriolytic activity against Gram-positive bacteria at physiological pH. Bacteriolytic activity is pH-dependent, with a maximum at around pH 5.6. In Mus musculus (Mouse), this protein is Lysozyme-like protein 6 (Lyzl6).